The chain runs to 76 residues: Conotoxin Bu28 (76 aa).

Residues 1-24 (MTSVQSATCCCLLWLVLCVQLVTP) form the signal peptide. The propeptide occupies 25–39 (DSPATAQLSRHLTAR). Cystine bridges form between Cys-50–Cys-63 and Cys-54–Cys-65. Arg-69 carries the arginine amide modification. The propeptide occupies 71 to 76 (VVSSSI).

It belongs to the conotoxin J superfamily. As to expression, expressed by the venom duct.

It is found in the secreted. Highly inhibits both nicotinic acetylcholine receptors (neuronal (alpha-3/beta-4) and muscular (alpha-1/beta-1/epsilon/delta) subtypes) and the voltage-gated potassium channel Kv1.6/KCNA6 subtype. In Conus bullatus (Bubble cone), this protein is Conotoxin Bu28.